We begin with the raw amino-acid sequence, 389 residues long: 26S proteasome regulatory subunit 6B homolog (389 aa).

175–182 (GPPGTGKT) is an ATP binding site.

This sequence belongs to the AAA ATPase family.

It is found in the cytoplasm. It localises to the nucleus. In terms of biological role, the 26S proteasome is involved in the ATP-dependent degradation of ubiquitinated proteins. The regulatory (or ATPase) complex confers ATP dependency and substrate specificity to the 26S complex. The polypeptide is 26S proteasome regulatory subunit 6B homolog (rpt3) (Schizosaccharomyces pombe (strain 972 / ATCC 24843) (Fission yeast)).